The sequence spans 348 residues: Arginine kinase Oct f 2 (348 aa).

The 83-residue stretch at 1 to 83 folds into the Phosphagen kinase N-terminal domain; sequence MAEELFKTLQ…LDAVIMDYHK (83 aa). Position 56-60 (56-60) interacts with substrate; the sequence is GVGIY. One can recognise a Phosphagen kinase C-terminal domain in the interval 111–347; sequence MIVSTRVRVG…NEIIREETNS (237 aa). Residues 114–118 and His177 contribute to the ATP site; that span reads STRVR. Residue Glu217 coordinates substrate. Arg221 contacts ATP. Cys263 lines the substrate pocket. Residues 272 to 276 and 300 to 305 each bind ATP; these read RASVH and RGIHGE. Substrate is bound at residue Glu305.

The protein belongs to the ATP:guanido phosphotransferase family. In terms of tissue distribution, muscle (at protein level).

The catalysed reaction is L-arginine + ATP = N(omega)-phospho-L-arginine + ADP + H(+). In terms of biological role, catalyzes the reversible transfer of high energy ATP gamma-phosphate group to L-arginine. In Amphioctopus fangsiao (Ocellated octopus), this protein is Arginine kinase Oct f 2.